Consider the following 384-residue polypeptide: Probable E3 ubiquitin-protein ligase rnf113 (384 aa).

Residues 1-11 (MDLFRKPKKRN) are compositionally biased toward basic residues. Positions 1–96 (MDLFRKPKKR…GPSGPRDQGA (96 aa)) are disordered. Over residues 42-52 (PMVQSTKQLDA) the composition is skewed to polar residues. The span at 60–71 (SSDDSDDSDDNQ) shows a compositional bias: acidic residues. The C3H1-type zinc-finger motif lies at 175–203 (DFAPDICKDYKETGFCTFGDSCKFVHDRS). The RING-type zinc finger occupies 241–279 (CFICGNPFVDPIVTKCKHYFCTGCALKSFQKSSKCPICQ). Positions 299-384 (KKQQQKQEAE…ESDDDDAEKD (86 aa)) are disordered. Composition is skewed to basic and acidic residues over residues 303-312 (QKQEAEKQEE) and 320-334 (EKPH…HDHE). Acidic residues predominate over residues 351–384 (EKSDEEQEIMMEDVEGLEGGENDSESDDDDAEKD).

It catalyses the reaction S-ubiquitinyl-[E2 ubiquitin-conjugating enzyme]-L-cysteine + [acceptor protein]-L-lysine = [E2 ubiquitin-conjugating enzyme]-L-cysteine + N(6)-ubiquitinyl-[acceptor protein]-L-lysine.. It participates in protein modification; protein ubiquitination. Functionally, may function as E3 ubiquitin-protein ligase that catalyzes the transfer of ubiquitin onto target proteins. May play a role in DNA repair via its role in the synthesis of 'Lys-63'-linked polyubiquitin chains that recruit proteins involved in repair to sites of DNA damage by alkylating agents. In Caenorhabditis elegans, this protein is Probable E3 ubiquitin-protein ligase rnf113 (rnf-113).